The primary structure comprises 236 residues: Uridylate kinase (236 aa).

10–13 (KLSG) contributes to the ATP binding site. Gly-52 is a UMP binding site. The ATP site is built by Gly-53 and Arg-57. Residues Asp-72 and 133–140 (TGNPFFTT) each bind UMP. Positions 160, 166, and 169 each coordinate ATP.

Belongs to the UMP kinase family. Homohexamer.

It localises to the cytoplasm. It catalyses the reaction UMP + ATP = UDP + ADP. It functions in the pathway pyrimidine metabolism; CTP biosynthesis via de novo pathway; UDP from UMP (UMPK route): step 1/1. Its activity is regulated as follows. Inhibited by UTP. Its function is as follows. Catalyzes the reversible phosphorylation of UMP to UDP. The polypeptide is Uridylate kinase (Cupriavidus pinatubonensis (strain JMP 134 / LMG 1197) (Cupriavidus necator (strain JMP 134))).